A 63-amino-acid chain; its full sequence is Disintegrin schistatin-like subunit B (63 aa).

The Disintegrin domain occupies 1–63 (NSVNPCCDPQ…TPDCPRNRYN (63 aa)). Intrachain disulfides connect cysteine 6–cysteine 29, cysteine 20–cysteine 26, cysteine 25–cysteine 50, and cysteine 38–cysteine 57. Residues 42–44 (RGD) carry the Cell attachment site motif.

Belongs to the disintegrin family. Dimeric disintegrin subfamily. Heterodimer with subunit A; disulfide-linked. In terms of tissue distribution, expressed by the venom gland.

It is found in the secreted. May bind to both alpha-IIb/beta-3 (ITGA2B/ITGB3) and alpha-V/beta-3 (ITGAV/ITGB3) integrins, and may inhibit platelet aggregation. This chain is Disintegrin schistatin-like subunit B, found in Echis carinatus (Saw-scaled viper).